The chain runs to 213 residues: NADH dehydrogenase [ubiquinone] iron-sulfur protein 7, mitochondrial (213 aa).

A mitochondrion-targeting transit peptide spans 1 to 31 (MALIARNAKLLTGTAPFLQRAATIHTTLPSL). A compositionally biased stretch (low complexity) spans 30–42 (SLSQQPASSPATS). Positions 30–52 (SLSQQPASSPATSGGAQPPSMNT) are disordered. The [4Fe-4S] cluster site is built by C88, C89, C153, and C183.

The protein belongs to the complex I 20 kDa subunit family. As to quaternary structure, complex I is composed of about 45 different subunits. This is a component of the iron-sulfur (IP) fragment of the enzyme. The cofactor is [4Fe-4S] cluster.

The protein resides in the mitochondrion. The catalysed reaction is a ubiquinone + NADH + 5 H(+)(in) = a ubiquinol + NAD(+) + 4 H(+)(out). Core subunit of the mitochondrial membrane respiratory chain NADH dehydrogenase (Complex I) that is believed to belong to the minimal assembly required for catalysis. Complex I functions in the transfer of electrons from NADH to the respiratory chain. The immediate electron acceptor for the enzyme is believed to be ubiquinone. This is NADH dehydrogenase [ubiquinone] iron-sulfur protein 7, mitochondrial from Solanum tuberosum (Potato).